The sequence spans 231 residues: Platelet-activating factor acetylhydrolase IB subunit alpha1 (231 aa).

At S2 the chain carries N-acetylserine. At S2 the chain carries Phosphoserine. Catalysis depends on residues S47, D192, and H195.

It belongs to the 'GDSL' lipolytic enzyme family. Platelet-activating factor acetylhydrolase IB beta/gamma subunits subfamily. As to quaternary structure, forms a catalytic dimer which is either homodimer (alpha1/alpha1 homodimer) or heterodimer with PAFAH1B2 (alpha1/alpha2 heterodimer). Component of the cytosolic (PAF-AH (I)) heterotetrameric enzyme, which is composed of PAFAH1B1 (beta), PAFAH1B2 (alpha2) and PAFAH1B3 (alpha1) subunits. The catalytic activity of the enzyme resides in the alpha1 (PAFAH1B3) and alpha2 (PAFAH1B2) subunits, whereas the beta subunit (PAFAH1B1) has regulatory activity. Trimer formation is not essential for the catalytic activity. Interacts with VLDLR; this interaction may modulate the Reelin pathway. As to expression, in the adult, expressed in brain, skeletal muscle, kidney, thymus, spleen, colon, testis, ovary and peripheral blood leukocytes. In the fetus, highest expression occurs in brain.

Its subcellular location is the cytoplasm. The catalysed reaction is a 1-O-alkyl-2-acetyl-sn-glycero-3-phosphocholine + H2O = a 1-O-alkyl-sn-glycero-3-phosphocholine + acetate + H(+). It carries out the reaction 1-O-hexadecyl-2-acetyl-sn-glycero-3-phosphocholine + H2O = 1-O-hexadecyl-sn-glycero-3-phosphocholine + acetate + H(+). The enzyme catalyses 1-O-hexadecyl-2-acetyl-sn-glycero-3-phosphate + H2O = 1-O-hexadecyl-sn-glycero-3-phosphate + acetate + H(+). Its activity is regulated as follows. Beta subunit (PAFAH1B1) inhibits the acetylhydrolase activity of the alpha1/alpha1 catalytic homodimer. Its function is as follows. Alpha1 catalytic subunit of the cytosolic type I platelet-activating factor (PAF) acetylhydrolase (PAF-AH (I)) heterotetrameric enzyme that catalyzes the hydrolyze of the acetyl group at the sn-2 position of PAF and its analogs and modulates the action of PAF. The activity and substrate specificity of PAF-AH (I) are affected by its subunit composition. Both alpha1/alpha1 homodimer (PAFAH1B3/PAFAH1B3 homodimer) and alpha1/alpha2 heterodimer(PAFAH1B3/PAFAH1B2 heterodimer) hydrolyze 1-O-alkyl-2-acetyl-sn-glycero-3-phosphoric acid (AAGPA) more efficiently than PAF, but they have little hydrolytic activity towards 1-O-alkyl-2-acetyl-sn-glycero-3-phosphorylethanolamine (AAGPE). Plays an important role during the development of brain. This chain is Platelet-activating factor acetylhydrolase IB subunit alpha1, found in Homo sapiens (Human).